We begin with the raw amino-acid sequence, 100 residues long: Large ribosomal subunit protein uL23 (100 aa).

The protein belongs to the universal ribosomal protein uL23 family. As to quaternary structure, part of the 50S ribosomal subunit. Contacts protein L29, and trigger factor when it is bound to the ribosome.

Its function is as follows. One of the early assembly proteins it binds 23S rRNA. One of the proteins that surrounds the polypeptide exit tunnel on the outside of the ribosome. Forms the main docking site for trigger factor binding to the ribosome. This chain is Large ribosomal subunit protein uL23, found in Kosmotoga olearia (strain ATCC BAA-1733 / DSM 21960 / TBF 19.5.1).